We begin with the raw amino-acid sequence, 128 residues long: T-cell leukemia/lymphoma protein 1B (128 aa).

The protein belongs to the TCL1 family. In terms of assembly, interacts with AKT1 and AKT2 (via PH domain). Does not interact with AKT3. Expressed in a variety of tissues including placenta and testis.

Enhances the phosphorylation and activation of AKT1 and AKT2. In Homo sapiens (Human), this protein is T-cell leukemia/lymphoma protein 1B (TCL1B).